The chain runs to 251 residues: Probable phosphatase Sputcn32_1369 (251 aa).

Positions 8, 10, 16, 41, 74, 102, 132, 193, and 195 each coordinate Zn(2+).

This sequence belongs to the PHP family. Zn(2+) serves as cofactor.

The sequence is that of Probable phosphatase Sputcn32_1369 from Shewanella putrefaciens (strain CN-32 / ATCC BAA-453).